The chain runs to 87 residues: Cell division topological specificity factor (87 aa).

This sequence belongs to the MinE family.

Prevents the cell division inhibition by proteins MinC and MinD at internal division sites while permitting inhibition at polar sites. This ensures cell division at the proper site by restricting the formation of a division septum at the midpoint of the long axis of the cell. In Roseiflexus castenholzii (strain DSM 13941 / HLO8), this protein is Cell division topological specificity factor.